Reading from the N-terminus, the 131-residue chain is Pancreatic polypeptide prohormone (131 aa).

Positions 1–29 (MAAAHRCLFLLLLSTCVALLLQPPLGALG) are cleaved as a signal peptide. Y65 is subject to Tyrosine amide.

This sequence belongs to the NPY family.

The protein localises to the secreted. Hormone secreted by pancreatic cells that acts as a regulator of pancreatic and gastrointestinal functions probably by signaling through the G protein-coupled receptor NPY4R2. This Bos taurus (Bovine) protein is Pancreatic polypeptide prohormone (PPY).